Here is a 334-residue protein sequence, read N- to C-terminus: Oligopeptide transport ATP-binding protein OppF (334 aa).

One can recognise an ABC transporter domain in the interval 12-265 (LEIADLKVHF…PLHPYTKALM (254 aa)). An ATP-binding site is contributed by 57 to 64 (GESGCGKS).

It belongs to the ABC transporter superfamily. In terms of assembly, the complex is composed of two ATP-binding proteins (OppD and OppF), two transmembrane proteins (OppB and OppC) and a solute-binding protein (OppA).

Its subcellular location is the cell inner membrane. The catalysed reaction is a [peptide](out) + ATP + H2O = a [peptide](in) + ADP + phosphate + H(+). It carries out the reaction L-alanyl-gamma-D-glutamyl-meso-2,6-diaminopimelate(out) + ATP + H2O = L-alanyl-gamma-D-glutamyl-meso-2,6-diaminopimelate(in) + ADP + phosphate + H(+). Part of the ABC transporter complex OppABCDF involved in the uptake of oligopeptides, including the cell wall murein tripeptide L-alanyl-gamma-D-glutamyl-meso-diaminopimelate. Probably responsible for energy coupling to the transport system. Plays an important nutritional role and is involved in the recycling of cell wall peptides. This is Oligopeptide transport ATP-binding protein OppF from Salmonella typhimurium (strain LT2 / SGSC1412 / ATCC 700720).